Here is a 417-residue protein sequence, read N- to C-terminus: Phosphoglycerate kinase (417 aa).

(2R)-3-phosphoglycerate is bound by residues V23, D24, F25, N26, Q39, R40, S63, H64, G66, R67, L122, R123, H170, and R171. Residue G214 coordinates ADP. Position 214 (G214) interacts with CDP. AMP is bound by residues A215 and K216. Residue A215 participates in ATP binding. A215 contributes to the Mg(2+) binding site. D219 lines the CDP pocket. D219 is a binding site for Mg(2+). K220 contributes to the AMP binding site. Residue K220 coordinates ATP. G238 contributes to the ADP binding site. G238 lines the CDP pocket. Positions 239 and 313 each coordinate AMP. Residues G239 and G313 each contribute to the ATP site. G338 and F343 together coordinate CDP. F343 is an ADP binding site. Residue E344 coordinates AMP. ATP-binding residues include E344, D375, and T376. D375 contributes to the Mg(2+) binding site.

This sequence belongs to the phosphoglycerate kinase family. Monomer. The cofactor is Mg(2+).

It localises to the cytoplasm. The protein localises to the mitochondrion. The enzyme catalyses (2R)-3-phosphoglycerate + ATP = (2R)-3-phospho-glyceroyl phosphate + ADP. Its pathway is carbohydrate degradation; glycolysis; pyruvate from D-glyceraldehyde 3-phosphate: step 2/5. In terms of biological role, catalyzes one of the two ATP producing reactions in the glycolytic pathway via the reversible conversion of 1,3-diphosphoglycerate to 3-phosphoglycerate. Both L- and D- forms of purine and pyrimidine nucleotides can be used as substrates, but the activity is much lower on pyrimidines. Negatively regulates the biosynthesis of acetyl-CoA from pyruvate in the mitochondrion. The sequence is that of Phosphoglycerate kinase (PGKA) from Penicillium citrinum.